The primary structure comprises 191 residues: Cell division protein SepF (191 aa).

The disordered stretch occupies residues 1–77; the sequence is MEGQDDYQLL…MGSNVIGLPG (77 aa).

Belongs to the SepF family. In terms of assembly, homodimer. Interacts with FtsZ.

Its subcellular location is the cytoplasm. In terms of biological role, cell division protein that is part of the divisome complex and is recruited early to the Z-ring. Probably stimulates Z-ring formation, perhaps through the cross-linking of FtsZ protofilaments. Its function overlaps with FtsA. This is Cell division protein SepF from Synechococcus sp. (strain JA-2-3B'a(2-13)) (Cyanobacteria bacterium Yellowstone B-Prime).